The following is a 2193-amino-acid chain: Highly reducing polyketide synthase VdtX (2193 aa).

A Ketosynthase family 3 (KS3) domain is found at 1-417 (MAICGIAVRL…GVNAHVIIES (417 aa)). Active-site for beta-ketoacyl synthase activity residues include cysteine 170, histidine 306, and histidine 340. Residues 513–809 (VFAGQGAQWP…HPYVPCLIRF (297 aa)) are malonyl-CoA:ACP transacylase (MAT) domain. The segment at 877 to 1001 (HELLGTRVVD…GEVAQENLSR (125 aa)) is N-terminal hotdog fold. The segment at 877 to 1128 (HELLGTRVVD…DIVLRPLGAN (252 aa)) is dehydratase (DH) domain. The region spanning 877 to 1202 (HELLGTRVVD…LQRQPKPSSE (326 aa)) is the PKS/mFAS DH domain. Histidine 909 (proton acceptor; for dehydratase activity) is an active-site residue. The C-terminal hotdog fold stretch occupies residues 1032-1202 (SVTSNTVSGR…LQRQPKPSSE (171 aa)). The Proton donor; for dehydratase activity role is filled by aspartate 1093. The segment at 1256–1390 (NYLNEPQQRI…DRWDSILKAA (135 aa)) is methyltransferase (CMet) domain. Residues 1575–1783 (GQQVQLLGDD…SGQHIGQLRL (209 aa)) form an enoyl reductase (ER) domain region. The tract at residues 1807–1981 (ASYLLVGGLG…ASVIDIGEVQ (175 aa)) is ketoreductase (KR) domain. The 82-residue stretch at 2102–2183 (PSATQFVSLE…AMGEHVIREL (82 aa)) folds into the Carrier domain. Serine 2143 carries the O-(pantetheine 4'-phosphoryl)serine modification.

Its function is as follows. Highly reducing polyketide synthase; part of the gene cluster that mediates the biosynthesis of viriditoxin, one of the 'classical' secondary metabolites produced by fungi and that has antibacterial activity. The first step is performed by the polyketide synthase VdtA which condenses one acetyl-CoA and 6 malonyl-CoA units to form the heptaketide monomer backbone of viriditoxin. The product of VdtA is then O-methylated on C7 by the O-methyltransferase VdtC. The O-methyl group is important for the stereoselective coupling of the monomers at the final step of viriditoxin biosynthesis. The short-chain dehydrogenase/reductase VdtF is involved in the reduction of the C3-C4 double bond. The FAD-binding monooxygenase VdtE then converts the ketone group into a methyl-ester group to yield semi-viriditoxin. Finally, the laccase VdtB is involved in dimerization of 2 semi-viriditoxin molecules to yield the final viriditoxin. The non-catalytic carboxylesterase-like protein VdtD affects the stereochemistical outcome of the coupling. The highly reducing polyketide synthase VdtX is not involved in viriditoxin synthesis, but might possibly play a role in the production of additional metabolites not identified yet. The polypeptide is Highly reducing polyketide synthase VdtX (Byssochlamys spectabilis (Paecilomyces variotii)).